Here is a 353-residue protein sequence, read N- to C-terminus: MNILGIETSCDETSAAVLSDGSVRSNIVSSQRCHTDFGGVVPELASREHERLIVSIVDAAITEANIAKNDLDVIAATAGPGLIGAVMVGLCFAEGLAWALGKPFVPVNHVEAHIFSPFISDEPGHREPKGDFVSLTVSGGHTLLSVVRQDLGYEVIGRTIDDAAGEAFDKTGKMLGLGYPAGPVIDRLAREGDSDFHRFPRALTASSQTSKSYRGNFDFSFSGLKTSVRTWLEAHDSEYVQKHQADLAASIQSAIVEVLVEKSVAAALLHKVNAISVAGGVSANSGLRSAMQAACDRHGIELFIPALAYSTDNAAMIATMAQLMIARGKYRIEDNSYGVAPFARFEAARKGAR.

Positions 109 and 113 each coordinate Fe cation. Substrate contacts are provided by residues 136 to 140 (TVSGG), D169, G182, D186, and N284. D312 provides a ligand contact to Fe cation.

This sequence belongs to the KAE1 / TsaD family. Requires Fe(2+) as cofactor.

It is found in the cytoplasm. The catalysed reaction is L-threonylcarbamoyladenylate + adenosine(37) in tRNA = N(6)-L-threonylcarbamoyladenosine(37) in tRNA + AMP + H(+). In terms of biological role, required for the formation of a threonylcarbamoyl group on adenosine at position 37 (t(6)A37) in tRNAs that read codons beginning with adenine. Is involved in the transfer of the threonylcarbamoyl moiety of threonylcarbamoyl-AMP (TC-AMP) to the N6 group of A37, together with TsaE and TsaB. TsaD likely plays a direct catalytic role in this reaction. This Chlorobaculum tepidum (strain ATCC 49652 / DSM 12025 / NBRC 103806 / TLS) (Chlorobium tepidum) protein is tRNA N6-adenosine threonylcarbamoyltransferase.